The sequence spans 429 residues: Enolase (429 aa).

Position 163 (glutamine 163) interacts with (2R)-2-phosphoglycerate. Glutamate 205 (proton donor) is an active-site residue. Positions 242, 287, and 314 each coordinate Mg(2+). (2R)-2-phosphoglycerate-binding residues include lysine 339, arginine 368, serine 369, and lysine 390. Lysine 339 acts as the Proton acceptor in catalysis.

Belongs to the enolase family. It depends on Mg(2+) as a cofactor.

It localises to the cytoplasm. It is found in the secreted. The protein localises to the cell surface. It carries out the reaction (2R)-2-phosphoglycerate = phosphoenolpyruvate + H2O. The protein operates within carbohydrate degradation; glycolysis; pyruvate from D-glyceraldehyde 3-phosphate: step 4/5. In terms of biological role, catalyzes the reversible conversion of 2-phosphoglycerate (2-PG) into phosphoenolpyruvate (PEP). It is essential for the degradation of carbohydrates via glycolysis. The chain is Enolase from Anaeromyxobacter dehalogenans (strain 2CP-C).